The chain runs to 212 residues: Large ribosomal subunit protein uL4 (212 aa).

This sequence belongs to the universal ribosomal protein uL4 family. As to quaternary structure, part of the 50S ribosomal subunit.

Its function is as follows. One of the primary rRNA binding proteins, this protein initially binds near the 5'-end of the 23S rRNA. It is important during the early stages of 50S assembly. It makes multiple contacts with different domains of the 23S rRNA in the assembled 50S subunit and ribosome. In terms of biological role, forms part of the polypeptide exit tunnel. The protein is Large ribosomal subunit protein uL4 of Caulobacter vibrioides (strain ATCC 19089 / CIP 103742 / CB 15) (Caulobacter crescentus).